The following is a 666-amino-acid chain: Putative cysteine-rich receptor-like protein kinase 31 (666 aa).

Residues 1 to 23 form the signal peptide; it reads MCLNTLCAILCFVLTVSFGFVSA. Gnk2-homologous domains lie at 24–130 and 136–245; these read QKCG…NNSF and LEPT…GYKY. At 24–280 the chain is on the extracellular side; the sequence is QKCGESVFFR…PDGKKISTGV (257 aa). 5 N-linked (GlcNAc...) asparagine glycosylation sites follow: Asn-52, Asn-62, Asn-104, Asn-127, and Asn-151. Residues 281–301 form a helical membrane-spanning segment; it reads IVAIVVSAVIFVVLVALGLVI. The Cytoplasmic segment spans residues 302–666; it reads WKRRQSYKTL…SASITRATPR (365 aa). Residues 339 to 616 form the Protein kinase domain; sequence FSRNNKLGQG…IFQMLTNSSI (278 aa). Residues 345–353 and Lys-367 contribute to the ATP site; that span reads LGQGGFGEV. The residue at position 412 (Tyr-412) is a Phosphotyrosine. Asp-464 acts as the Proton acceptor in catalysis. Ser-468 is subject to Phosphoserine. Thr-504 bears the Phosphothreonine mark. Position 512 is a phosphotyrosine (Tyr-512).

Belongs to the protein kinase superfamily. Ser/Thr protein kinase family. CRK subfamily.

Its subcellular location is the membrane. The catalysed reaction is L-seryl-[protein] + ATP = O-phospho-L-seryl-[protein] + ADP + H(+). The enzyme catalyses L-threonyl-[protein] + ATP = O-phospho-L-threonyl-[protein] + ADP + H(+). This chain is Putative cysteine-rich receptor-like protein kinase 31 (CRK31), found in Arabidopsis thaliana (Mouse-ear cress).